We begin with the raw amino-acid sequence, 134 residues long: Large-conductance mechanosensitive channel (134 aa).

2 helical membrane-spanning segments follow: residues phenylalanine 10 to glycine 30 and glycine 76 to isoleucine 96.

The protein belongs to the MscL family. In terms of assembly, homopentamer.

It localises to the cell inner membrane. Its function is as follows. Channel that opens in response to stretch forces in the membrane lipid bilayer. May participate in the regulation of osmotic pressure changes within the cell. The chain is Large-conductance mechanosensitive channel from Prosthecochloris aestuarii (strain DSM 271 / SK 413).